Here is a 185-residue protein sequence, read N- to C-terminus: Peptidyl-tRNA hydrolase (185 aa).

Tyrosine 14 serves as a coordination point for tRNA. The active-site Proton acceptor is the histidine 19. Phenylalanine 64, asparagine 66, and asparagine 112 together coordinate tRNA.

Belongs to the PTH family. As to quaternary structure, monomer.

The protein localises to the cytoplasm. It catalyses the reaction an N-acyl-L-alpha-aminoacyl-tRNA + H2O = an N-acyl-L-amino acid + a tRNA + H(+). Functionally, hydrolyzes ribosome-free peptidyl-tRNAs (with 1 or more amino acids incorporated), which drop off the ribosome during protein synthesis, or as a result of ribosome stalling. Catalyzes the release of premature peptidyl moieties from peptidyl-tRNA molecules trapped in stalled 50S ribosomal subunits, and thus maintains levels of free tRNAs and 50S ribosomes. This Lacticaseibacillus casei (strain BL23) (Lactobacillus casei) protein is Peptidyl-tRNA hydrolase.